The following is a 425-amino-acid chain: MREPDFLNHFLKKGYFKKHAKAVLALSGGLDSMFLFKVLSTYQKELEIELILAHVNHKQRIESDWEEKELRKLAAEAELPIYISNFSGEFSEARARNFRYDFFQEVMKKTGATALVTAHHADDQVETILMRLIRGTRLRYLSGIKEKQVVGEIEIIRPFLHFQKKDFPSIFHFEDTSNQENHYFRNRIRNSYLPELEKENPRFRDAILGIGNEILDYDLAIAELSNNINVEDLQQLFSYSESTQRVLLQTYLNRFPDLNLTKAQFAEVQQILKSKSQYRHPIKNGYELIKEYQQFQICKISPQADEEEDELVLHYQNQVAYQGYLFSFGLPLEGESIQQIPVSRETSIHIRHRKTGDVLIQNGHRKKLRRLFIDLKIPMEKRNSALIIEQFGEIVSILGIATNNLSKKTKNDIMNTVLYIEKIDR.

Residue 27–32 coordinates ATP; that stretch reads SGGLDS.

It belongs to the tRNA(Ile)-lysidine synthase family.

Its subcellular location is the cytoplasm. The enzyme catalyses cytidine(34) in tRNA(Ile2) + L-lysine + ATP = lysidine(34) in tRNA(Ile2) + AMP + diphosphate + H(+). In terms of biological role, ligates lysine onto the cytidine present at position 34 of the AUA codon-specific tRNA(Ile) that contains the anticodon CAU, in an ATP-dependent manner. Cytidine is converted to lysidine, thus changing the amino acid specificity of the tRNA from methionine to isoleucine. In Streptococcus pneumoniae (strain P1031), this protein is tRNA(Ile)-lysidine synthase.